Here is a 502-residue protein sequence, read N- to C-terminus: ATP synthase subunit alpha (502 aa).

169–176 (GDRQTGKT) provides a ligand contact to ATP.

Belongs to the ATPase alpha/beta chains family. In terms of assembly, F-type ATPases have 2 components, CF(1) - the catalytic core - and CF(0) - the membrane proton channel. CF(1) has five subunits: alpha(3), beta(3), gamma(1), delta(1), epsilon(1). CF(0) has three main subunits: a(1), b(2) and c(9-12). The alpha and beta chains form an alternating ring which encloses part of the gamma chain. CF(1) is attached to CF(0) by a central stalk formed by the gamma and epsilon chains, while a peripheral stalk is formed by the delta and b chains.

The protein resides in the cell inner membrane. The catalysed reaction is ATP + H2O + 4 H(+)(in) = ADP + phosphate + 5 H(+)(out). Produces ATP from ADP in the presence of a proton gradient across the membrane. The alpha chain is a regulatory subunit. This Kosmotoga olearia (strain ATCC BAA-1733 / DSM 21960 / TBF 19.5.1) protein is ATP synthase subunit alpha.